Here is a 64-residue protein sequence, read N- to C-terminus: Lantibiotic actagardine (64 aa).

The propeptide occupies 1-45; that stretch reads MSALAIEKSWKDVDLRDGATSHPAGLGFGELTFEDLREDRTIYAA. A cross-link (lanthionine (Ser-Cys)) is located at residues 46–51; it reads SSGWVC. 2 cross-links (beta-methyllanthionine (Thr-Cys)) span residues 52 to 57 and 54 to 62; these read TLTIEC and TIECGTVIC. The beta-methyllanthionine sulfoxide (Thr-Cys) cross-link spans 59–64; it reads TVICAC.

This sequence belongs to the type B lantibiotic family. Maturation of lantibiotics involves the enzymatic conversion of Thr, and Ser into dehydrated AA by the enzyme garM and the formation of thioether bonds with cysteine. The 59-64 beta-methyllanthionine thioether bond is oxidized to a sulfoxide by the monooxygenase GarO. This is followed by membrane translocation and cleavage of the modified precursor. Post-translationally, the sulfoxide group of the 59-64 beta-methyllanthionine thioether bond is mildly important for activity, since the antibacterial activity of deoxyactagardine is marginally lower compared with oxidized actagardine.

Its function is as follows. Has potent antibacterial activity against some Gram-positive bacteria. Has good antistreptococcal activity. Inhibits cell wall biosynthesis by binding to lipid II and blocking transglycosylation. In Actinoplanes garbadinensis, this protein is Lantibiotic actagardine.